We begin with the raw amino-acid sequence, 383 residues long: Acetylornithine deacetylase (383 aa).

H80 serves as a coordination point for Zn(2+). D82 is a catalytic residue. D112 contributes to the Zn(2+) binding site. E144 is an active-site residue. Zn(2+) is bound by residues E145, E169, and H355.

The protein belongs to the peptidase M20A family. ArgE subfamily. In terms of assembly, homodimer. It depends on Zn(2+) as a cofactor. Co(2+) is required as a cofactor. The cofactor is glutathione.

Its subcellular location is the cytoplasm. The enzyme catalyses N(2)-acetyl-L-ornithine + H2O = L-ornithine + acetate. Its pathway is amino-acid biosynthesis; L-arginine biosynthesis; L-ornithine from N(2)-acetyl-L-ornithine (linear): step 1/1. Catalyzes the hydrolysis of the amide bond of N(2)-acetylated L-amino acids. Cleaves the acetyl group from N-acetyl-L-ornithine to form L-ornithine, an intermediate in L-arginine biosynthesis pathway, and a branchpoint in the synthesis of polyamines. This is Acetylornithine deacetylase from Klebsiella pneumoniae (strain 342).